Consider the following 143-residue polypeptide: Large ribosomal subunit protein uL15 (143 aa).

Residues 1–51 (MELNGIKPAAGAKHAKRRVGRGIGSGIGKTAGRGHKGQKSRAGGFHKVGFE) form a disordered region. Positions 21 to 31 (RGIGSGIGKTA) are enriched in gly residues.

The protein belongs to the universal ribosomal protein uL15 family. In terms of assembly, part of the 50S ribosomal subunit.

Binds to the 23S rRNA. The chain is Large ribosomal subunit protein uL15 from Variovorax paradoxus (strain S110).